Consider the following 42-residue polypeptide: Photosystem II reaction center protein J (42 aa).

The helical transmembrane segment at 10–30 (IPLWLVGTVAGTAALTLVAVF) threads the bilayer.

This sequence belongs to the PsbJ family. PSII is composed of 1 copy each of membrane proteins PsbA, PsbB, PsbC, PsbD, PsbE, PsbF, PsbH, PsbI, PsbJ, PsbK, PsbL, PsbM, PsbT, PsbX, PsbY, PsbZ, Psb30/Ycf12, at least 3 peripheral proteins of the oxygen-evolving complex and a large number of cofactors. It forms dimeric complexes.

It is found in the plastid. The protein localises to the chloroplast thylakoid membrane. One of the components of the core complex of photosystem II (PSII). PSII is a light-driven water:plastoquinone oxidoreductase that uses light energy to abstract electrons from H(2)O, generating O(2) and a proton gradient subsequently used for ATP formation. It consists of a core antenna complex that captures photons, and an electron transfer chain that converts photonic excitation into a charge separation. The chain is Photosystem II reaction center protein J from Chlorella vulgaris (Green alga).